A 320-amino-acid polypeptide reads, in one-letter code: Beta-ketoacyl-[acyl-carrier-protein] synthase III (320 aa).

Active-site residues include C114 and H247. The segment at 248–252 is ACP-binding; sequence QANRR. N277 is an active-site residue.

It belongs to the thiolase-like superfamily. FabH family. Homodimer.

The protein resides in the cytoplasm. The catalysed reaction is malonyl-[ACP] + acetyl-CoA + H(+) = 3-oxobutanoyl-[ACP] + CO2 + CoA. The protein operates within lipid metabolism; fatty acid biosynthesis. In terms of biological role, catalyzes the condensation reaction of fatty acid synthesis by the addition to an acyl acceptor of two carbons from malonyl-ACP. Catalyzes the first condensation reaction which initiates fatty acid synthesis and may therefore play a role in governing the total rate of fatty acid production. Possesses both acetoacetyl-ACP synthase and acetyl transacylase activities. Its substrate specificity determines the biosynthesis of branched-chain and/or straight-chain of fatty acids. The polypeptide is Beta-ketoacyl-[acyl-carrier-protein] synthase III (Neisseria meningitidis serogroup A / serotype 4A (strain DSM 15465 / Z2491)).